The chain runs to 325 residues: Glutarate 2-hydroxylase (325 aa).

Residues H160, D162, and H292 each coordinate Fe cation.

The protein belongs to the glutarate hydroxylase family. In terms of assembly, homotetramer. It depends on Fe(2+) as a cofactor.

The catalysed reaction is glutarate + 2-oxoglutarate + O2 = (S)-2-hydroxyglutarate + succinate + CO2. Its pathway is amino-acid degradation. Acts as an alpha-ketoglutarate-dependent dioxygenase catalyzing hydroxylation of glutarate (GA) to L-2-hydroxyglutarate (L2HG). Functions in a L-lysine degradation pathway that proceeds via cadaverine, glutarate and L-2-hydroxyglutarate. The sequence is that of Glutarate 2-hydroxylase from Escherichia coli (strain UTI89 / UPEC).